We begin with the raw amino-acid sequence, 507 residues long: Maturase K (507 aa).

It belongs to the intron maturase 2 family. MatK subfamily.

It localises to the plastid. The protein resides in the chloroplast. In terms of biological role, usually encoded in the trnK tRNA gene intron. Probably assists in splicing its own and other chloroplast group II introns. The sequence is that of Maturase K from Fagopyrum tataricum (Tartarian buckwheat).